Consider the following 191-residue polypeptide: MIRISDAAQAHFAKLLANQEEGTQIRVFVINPGTPNAECGVSYCPPDAVEATDTALKFDLLTAYVDELSAPYLEDAEIDFVTDQLGSQLTLKAPNAKMRKVADDAPLMERVEYMLQSQINPQLAGHGGRVSLMEITEDGYAILQFGGGCNSCSMVDVTLKEGIEKQLLNEFPELKGVRDLTEHQRGEHSYY.

[4Fe-4S] cluster contacts are provided by cysteine 149 and cysteine 152.

It belongs to the NfuA family. As to quaternary structure, homodimer. Requires [4Fe-4S] cluster as cofactor.

Its function is as follows. Involved in iron-sulfur cluster biogenesis. Binds a 4Fe-4S cluster, can transfer this cluster to apoproteins, and thereby intervenes in the maturation of Fe/S proteins. Could also act as a scaffold/chaperone for damaged Fe/S proteins. This chain is Fe/S biogenesis protein NfuA, found in Escherichia coli O7:K1 (strain IAI39 / ExPEC).